Here is a 153-residue protein sequence, read N- to C-terminus: Endoribonuclease YbeY (153 aa).

Zn(2+) is bound by residues His-114, His-118, and His-124.

It belongs to the endoribonuclease YbeY family. Requires Zn(2+) as cofactor.

The protein resides in the cytoplasm. Its function is as follows. Single strand-specific metallo-endoribonuclease involved in late-stage 70S ribosome quality control and in maturation of the 3' terminus of the 16S rRNA. This chain is Endoribonuclease YbeY, found in Shewanella putrefaciens (strain CN-32 / ATCC BAA-453).